Here is a 289-residue protein sequence, read N- to C-terminus: Deoxyuridine 5'-triphosphate nucleotidohydrolase (289 aa).

Substrate contacts are provided by residues 176-178 and 283-284; these read RSG and FG.

It belongs to the dUTPase family. Requires Mg(2+) as cofactor.

It carries out the reaction dUTP + H2O = dUMP + diphosphate + H(+). Its function is as follows. Involved in nucleotide metabolism: produces dUMP, the immediate precursor of thymidine nucleotides and decreases the intracellular concentration of dUTP to avoid uracil incorporation into viral DNA. This is Deoxyuridine 5'-triphosphate nucleotidohydrolase from Equus caballus (Horse).